A 308-amino-acid chain; its full sequence is Aspartate carbamoyltransferase catalytic subunit (308 aa).

Positions 55 and 56 each coordinate carbamoyl phosphate. L-aspartate is bound at residue Lys-84. Residues Arg-105, His-133, and Gln-136 each coordinate carbamoyl phosphate. L-aspartate contacts are provided by Arg-167 and Arg-228. Residues Leu-267 and Pro-268 each coordinate carbamoyl phosphate.

Belongs to the aspartate/ornithine carbamoyltransferase superfamily. ATCase family. In terms of assembly, heterooligomer of catalytic and regulatory chains.

The catalysed reaction is carbamoyl phosphate + L-aspartate = N-carbamoyl-L-aspartate + phosphate + H(+). It participates in pyrimidine metabolism; UMP biosynthesis via de novo pathway; (S)-dihydroorotate from bicarbonate: step 2/3. Functionally, catalyzes the condensation of carbamoyl phosphate and aspartate to form carbamoyl aspartate and inorganic phosphate, the committed step in the de novo pyrimidine nucleotide biosynthesis pathway. The chain is Aspartate carbamoyltransferase catalytic subunit from Methanocella arvoryzae (strain DSM 22066 / NBRC 105507 / MRE50).